Reading from the N-terminus, the 224-residue chain is uncharacterized protein (224 aa).

D52 is an active-site residue.

This sequence belongs to the pseudouridine synthase RluA family.

The enzyme catalyses a uridine in RNA = a pseudouridine in RNA. This is an uncharacterized protein from Haemophilus influenzae (strain ATCC 51907 / DSM 11121 / KW20 / Rd).